We begin with the raw amino-acid sequence, 522 residues long: Hydroxymethylglutaryl-CoA synthase, cytoplasmic (522 aa).

Positions 43 and 44 each coordinate (3S)-3-hydroxy-3-methylglutaryl-CoA. The Proton donor/acceptor role is filled by glutamate 95. 8 residues coordinate (3S)-3-hydroxy-3-methylglutaryl-CoA: cysteine 129, asparagine 167, threonine 171, serine 221, histidine 264, lysine 273, asparagine 344, and serine 378. Cysteine 129 functions as the Acyl-thioester intermediate in the catalytic mechanism. The active-site Proton donor/acceptor is the histidine 264.

It belongs to the thiolase-like superfamily. HMG-CoA synthase family. Homodimer.

It is found in the cytoplasm. The enzyme catalyses acetoacetyl-CoA + acetyl-CoA + H2O = (3S)-3-hydroxy-3-methylglutaryl-CoA + CoA + H(+). It participates in metabolic intermediate biosynthesis; (R)-mevalonate biosynthesis; (R)-mevalonate from acetyl-CoA: step 2/3. Functionally, catalyzes the condensation of acetyl-CoA with acetoacetyl-CoA to form HMG-CoA, which is converted by HMG-CoA reductase (HMGCR) into mevalonate, a precursor for cholesterol synthesis. This chain is Hydroxymethylglutaryl-CoA synthase, cytoplasmic (HMGCS1), found in Gallus gallus (Chicken).